The chain runs to 509 residues: Protein disulfide-isomerase (509 aa).

A signal peptide spans methionine 1–alanine 19. The region spanning aspartate 20 to glycine 136 is the Thioredoxin 1 domain. Residues cysteine 55 and cysteine 58 each act as nucleophile in the active site. Cysteine 55 and cysteine 58 are joined by a disulfide. Residue lysine 202 is modified to N6-acetyllysine. Lysine 224 and lysine 273 each carry N6-succinyllysine. Residues serine 333 and serine 359 each carry the phosphoserine modification. The 143-residue stretch at glutamate 335 to glutamine 477 folds into the Thioredoxin 2 domain. Catalysis depends on nucleophile residues cysteine 399 and cysteine 402. An intrachain disulfide couples cysteine 399 to cysteine 402. The residue at position 429 (serine 429) is a Phosphoserine. The disordered stretch occupies residues glutamate 473 to leucine 509. Over residues alanine 480 to aspartate 501 the composition is skewed to acidic residues. A Prevents secretion from ER motif is present at residues lysine 506–leucine 509.

This sequence belongs to the protein disulfide isomerase family. In terms of assembly, heterodimer; heterodimerizes with the protein microsomal triglyceride transfer MTTP. Homodimer. Homodimer. Monomers and homotetramers may also occur. Interacts with P4HA2, forming a heterotetramer consisting of 2 alpha subunits (P4HA2) and 2 beta (P4HB), where P4HB plays the role of a structural subunit; this tetramer catalyzes the formation of 4-hydroxyproline in collagen. Also constitutes the structural subunit of the microsomal triacylglycerol transfer protein MTTP in mammalian cells. Stabilizes both enzymes and retain them in the ER without contributing to the catalytic activity. Binds UBQLN1. Interacts with ERO1B. Interacts with ILDR2. Interacts with ERN1/IRE1A (via N-terminus); the interaction is enhanced by phosphorylation of P4HB by FAM20C in response to endoplasmic reticulum stress and results in attenuation of ERN1 activity. In terms of processing, phosphorylation of Ser-359 by FAM20C is induced by endoplasmic reticulum stress and results in a functional switch from oxidoreductase to molecular chaperone. It also promotes interaction with ERN1.

Its subcellular location is the endoplasmic reticulum. It is found in the endoplasmic reticulum lumen. It localises to the melanosome. The protein resides in the cell membrane. The enzyme catalyses Catalyzes the rearrangement of -S-S- bonds in proteins.. This multifunctional protein catalyzes the formation, breakage and rearrangement of disulfide bonds. At the cell surface, seems to act as a reductase that cleaves disulfide bonds of proteins attached to the cell. May therefore cause structural modifications of exofacial proteins. Inside the cell, seems to form/rearrange disulfide bonds of nascent proteins. At high concentrations and following phosphorylation by FAM20C, functions as a chaperone that inhibits aggregation of misfolded proteins. At low concentrations, facilitates aggregation (anti-chaperone activity). May be involved with other chaperones in the structural modification of the TG precursor in hormone biogenesis. Also acts as a structural subunit of various enzymes such as prolyl 4-hydroxylase and microsomal triacylglycerol transfer protein MTTP. Receptor for LGALS9; the interaction retains P4HB at the cell surface of Th2 T helper cells, increasing disulfide reductase activity at the plasma membrane, altering the plasma membrane redox state and enhancing cell migration. The polypeptide is Protein disulfide-isomerase (P4HB) (Cricetulus griseus (Chinese hamster)).